The following is a 238-amino-acid chain: Purine nucleoside phosphorylase DeoD-type (238 aa).

An a purine D-ribonucleoside-binding site is contributed by His4. Residues Gly20, Arg24, Arg43, and 87-90 (RVGS) each bind phosphate. A purine D-ribonucleoside is bound by residues 179 to 181 (EME) and 203 to 204 (SD). Asp204 functions as the Proton donor in the catalytic mechanism.

It belongs to the PNP/UDP phosphorylase family. As to quaternary structure, homohexamer; trimer of homodimers.

It carries out the reaction a purine D-ribonucleoside + phosphate = a purine nucleobase + alpha-D-ribose 1-phosphate. The enzyme catalyses a purine 2'-deoxy-D-ribonucleoside + phosphate = a purine nucleobase + 2-deoxy-alpha-D-ribose 1-phosphate. Its function is as follows. Catalyzes the reversible phosphorolytic breakdown of the N-glycosidic bond in the beta-(deoxy)ribonucleoside molecules, with the formation of the corresponding free purine bases and pentose-1-phosphate. The chain is Purine nucleoside phosphorylase DeoD-type from Histophilus somni (strain 2336) (Haemophilus somnus).